A 197-amino-acid polypeptide reads, in one-letter code: dITP/XTP pyrophosphatase (197 aa).

7 to 12 (TGNEQK) provides a ligand contact to substrate. The Mg(2+) site is built by glutamate 44 and aspartate 73. Catalysis depends on aspartate 73, which acts as the Proton acceptor. Substrate is bound by residues threonine 74, 156 to 159 (FGYD), lysine 179, and 184 to 185 (HR).

It belongs to the HAM1 NTPase family. As to quaternary structure, homodimer. The cofactor is Mg(2+).

The catalysed reaction is XTP + H2O = XMP + diphosphate + H(+). It catalyses the reaction dITP + H2O = dIMP + diphosphate + H(+). It carries out the reaction ITP + H2O = IMP + diphosphate + H(+). Its function is as follows. Pyrophosphatase that catalyzes the hydrolysis of nucleoside triphosphates to their monophosphate derivatives, with a high preference for the non-canonical purine nucleotides XTP (xanthosine triphosphate), dITP (deoxyinosine triphosphate) and ITP. Seems to function as a house-cleaning enzyme that removes non-canonical purine nucleotides from the nucleotide pool, thus preventing their incorporation into DNA/RNA and avoiding chromosomal lesions. The chain is dITP/XTP pyrophosphatase from Elusimicrobium minutum (strain Pei191).